A 66-amino-acid polypeptide reads, in one-letter code: DNA gyrase inhibitor YacG (66 aa).

Cys9, Cys12, Cys28, and Cys32 together coordinate Zn(2+). The segment at 45–66 (HKIAGSEESEDELYSGDLEPRH) is disordered.

The protein belongs to the DNA gyrase inhibitor YacG family. Interacts with GyrB. Zn(2+) serves as cofactor.

Inhibits all the catalytic activities of DNA gyrase by preventing its interaction with DNA. Acts by binding directly to the C-terminal domain of GyrB, which probably disrupts DNA binding by the gyrase. The polypeptide is DNA gyrase inhibitor YacG (Pseudomonas putida (strain ATCC 47054 / DSM 6125 / CFBP 8728 / NCIMB 11950 / KT2440)).